Consider the following 347-residue polypeptide: KIN17-like protein KLP (347 aa).

The Nuclear localization signal (NLS) motif lies at 222–225; that stretch reads KRKR.

This sequence belongs to the KIN17 family.

It is found in the cytoplasm. It localises to the nucleus. Its function is as follows. May act as repressor of root growth during copper excess and of hypocotyl growth in the dark. This Arabidopsis thaliana (Mouse-ear cress) protein is KIN17-like protein KLP.